A 426-amino-acid chain; its full sequence is Phytoene synthase 3, chloroplastic (426 aa).

A chloroplast-targeting transit peptide spans 1 to 52 (MMSTSRAVKSPACAARRRQWSADAPNRTATFLACRHGRRLGGGGGAPCSVRA).

This sequence belongs to the phytoene/squalene synthase family. As to expression, expressed in roots and endosperm.

The protein localises to the plastid. Its subcellular location is the chloroplast. It localises to the plastoglobule. The catalysed reaction is 2 (2E,6E,10E)-geranylgeranyl diphosphate = 15-cis-phytoene + 2 diphosphate. Its function is as follows. Catalyzes the conversion of geranylgeranyl diphosphate to phytoene. Mediates the first committed step in carotenoid biosynthesis. May play a role in regulating carotenoid flux in response to abiotic stress in roots. May control flux to carotenoid precursors that are required for abiotic stress-induced abscisic acid (ABA) formation in roots. This is Phytoene synthase 3, chloroplastic from Zea mays (Maize).